The chain runs to 406 residues: Argininosuccinate synthase (406 aa).

8-16 is a binding site for ATP; sequence AYSGGLDTS. Y86 contributes to the L-citrulline binding site. Position 116 (G116) interacts with ATP. L-aspartate-binding residues include T118, N122, and D123. N122 contacts L-citrulline. L-citrulline contacts are provided by R126, S174, E259, and Y271.

The protein belongs to the argininosuccinate synthase family. Type 1 subfamily. In terms of assembly, homotetramer.

It localises to the cytoplasm. It carries out the reaction L-citrulline + L-aspartate + ATP = 2-(N(omega)-L-arginino)succinate + AMP + diphosphate + H(+). Its pathway is amino-acid biosynthesis; L-arginine biosynthesis; L-arginine from L-ornithine and carbamoyl phosphate: step 2/3. The protein is Argininosuccinate synthase of Lacticaseibacillus paracasei (strain ATCC 334 / BCRC 17002 / CCUG 31169 / CIP 107868 / KCTC 3260 / NRRL B-441) (Lactobacillus paracasei).